The chain runs to 301 residues: NAD kinase (301 aa).

The active-site Proton acceptor is aspartate 81. NAD(+) is bound by residues 81-82, 155-156, histidine 166, arginine 183, aspartate 185, 196-201, and glutamine 256; these read DG, NE, and TAYSLS.

Belongs to the NAD kinase family. The cofactor is a divalent metal cation.

Its subcellular location is the cytoplasm. The catalysed reaction is NAD(+) + ATP = ADP + NADP(+) + H(+). Functionally, involved in the regulation of the intracellular balance of NAD and NADP, and is a key enzyme in the biosynthesis of NADP. Catalyzes specifically the phosphorylation on 2'-hydroxyl of the adenosine moiety of NAD to yield NADP. The protein is NAD kinase of Mannheimia succiniciproducens (strain KCTC 0769BP / MBEL55E).